An 816-amino-acid polypeptide reads, in one-letter code: MISDWCVVLVLLMSRLVFGLNFTEPVNYILKLGEDSSSRLLDCSVNLPVELIKKIDWTHNDIVINNKPNITLSENGQKLVIAHYQSHNSGRYGCKVTAMNEESVQRVFDLLPASETEGNQTIEMMLRIKNDISLLVELVMNKLDLDCTAVGASPINITWIKNDRLIEARSNLSNFRYSFSPNFLKLSIKELRLDDAGIYKCILENKYGKIEHIMTVEIYEKMFSKPIVSSTDKHKVFYVNYGQNLTVPIYVTAFLPHPHFQMLYVYSMTSPNTNETKLALRVLPTMRELTVLEKGQRRGNSISHIKLDYFFNNISEQDFGNYTFMAGNKYGFDIYPFQILHTKYMQTTVFPPMKSSINKIYKEESVEKTVIFIVITSMLAGLIFVAFVIFFICRVRSKDKFKNSNINYIKPLETVILNLGDNNTSGVTMVTSVSASYASRRFRHSLNNNLINDKQKLNLKIAPDPAWEIKLEQLETDCLLGEGAFGRVFRATARDLPNHTGVQTVAVKMLKEDCCEQDLKDFISEIEVMKSIGKHINILNLLAVSSQQGKLYIVVEYCRHGNLRSFLKDNRPVMQANSVITKKITLYDLTSFCLQVARGMNFLASKKCIHRDIAARNVLVGEGYLMKIADFGLARDIHEQDYYRKCTDGRLPVKWMAIEALFDRVYTTQSDIWSFGILAWEIVTFGGSPYPGIALEKLFDLLKQGYRMERPLNCTDDMYTLMLNCWKEIPSKRPTFSQLIEDLERMLLDASSTEYIDLQPIQPERTESFSTSLHTSASMLNTDLHEKNKCDHDEISFTHEDGLSEADILLSHYAVS.

Positions 1–19 (MISDWCVVLVLLMSRLVFG) are cleaved as a signal peptide. Residues 20-370 (LNFTEPVNYI…YKEESVEKTV (351 aa)) lie on the Extracellular side of the membrane. N-linked (GlcNAc...) asparagine glycosylation is found at Asn21, Asn69, Asn119, Asn156, Asn171, Asn244, Asn274, Asn313, and Asn321. The 81-residue stretch at 25–105 (PVNYILKLGE…VTAMNEESVQ (81 aa)) folds into the Ig-like C2-type 1 domain. Residues Cys43 and Cys94 are joined by a disulfide bond. An Ig-like C2-type 2 domain is found at 126–217 (LRIKNDISLL…GKIEHIMTVE (92 aa)). Cys147 and Cys201 are oxidised to a cystine. A helical transmembrane segment spans residues 371-391 (IFIVITSMLAGLIFVAFVIFF). The Cytoplasmic portion of the chain corresponds to 392-816 (ICRVRSKDKF…DILLSHYAVS (425 aa)). Positions 474–747 (LETDCLLGEG…QLIEDLERML (274 aa)) constitute a Protein kinase domain. Residues 480–488 (LGEGAFGRV) and Lys508 contribute to the ATP site. Asp612 (proton acceptor) is an active-site residue. Tyr643 is subject to Phosphotyrosine; by autocatalysis.

Belongs to the protein kinase superfamily. Tyr protein kinase family. Fibroblast growth factor receptor subfamily.

It is found in the membrane. It carries out the reaction L-tyrosyl-[protein] + ATP = O-phospho-L-tyrosyl-[protein] + ADP + H(+). Functionally, receptor for basic fibroblast growth factor. The protein is Fibroblast growth factor receptor (FGFR) of Hydra vulgaris (Hydra).